Here is a 179-residue protein sequence, read N- to C-terminus: Translation initiation factor IF-3 (179 aa).

The protein belongs to the IF-3 family. As to quaternary structure, monomer.

It localises to the cytoplasm. Its function is as follows. IF-3 binds to the 30S ribosomal subunit and shifts the equilibrium between 70S ribosomes and their 50S and 30S subunits in favor of the free subunits, thus enhancing the availability of 30S subunits on which protein synthesis initiation begins. This Buchnera aphidicola subsp. Acyrthosiphon pisum (strain APS) (Acyrthosiphon pisum symbiotic bacterium) protein is Translation initiation factor IF-3.